The primary structure comprises 201 residues: Putative pseudouridine methyltransferase (201 aa).

Residues methionine 132 and cysteine 186 each contribute to the S-adenosyl-L-methionine site.

It belongs to the methyltransferase superfamily. TrmY family.

The protein localises to the cytoplasm. In Vibrio cholerae serotype O1 (strain ATCC 39315 / El Tor Inaba N16961), this protein is Putative pseudouridine methyltransferase.